A 466-amino-acid chain; its full sequence is Ras GTPase-activating protein-binding protein 1 (466 aa).

An NTF2 domain is found at 11-133; that stretch reads VGREFVRQYY…FYVHNDIFRY (123 aa). Residues lysine 36, lysine 50, lysine 59, lysine 64, lysine 76, and lysine 123 each participate in a glycyl lysine isopeptide (Lys-Gly) (interchain with G-Cter in ubiquitin) cross-link. Positions 142–225 are acidic disordered region; sequence VTEPQEESEE…EPVLEETAPE (84 aa). Position 143 is a phosphothreonine (threonine 143). 2 disordered regions span residues 144-172 and 184-243; these read EPQEESEEEVEEPEERQQTPEVVPDDSGT and EEHL…QTVQ. Acidic residues-rich tracts occupy residues 145–157 and 185–206; these read PQEESEEEVEEPE and EHLEEPVAEPEPDPEPEPEQEP. Serine 149 is modified (phosphoserine). 4 positions are modified to phosphoserine: serine 231, serine 232, serine 250, and serine 253. The disordered stretch occupies residues 255–329; the sequence is TSKNLPPSGA…REAGEQGDIE (75 aa). 2 stretches are compositionally biased toward basic and acidic residues: residues 297 to 307 and 318 to 329; these read PQRDQRVREQR and PIREAGEQGDIE. The RRM domain occupies 340-415; the sequence is HQLFIGNLPH…VRLNVEEKKT (76 aa). Residues lysine 353 and lysine 357 each participate in a glycyl lysine isopeptide (Lys-Gly) (interchain with G-Cter in ubiquitin) cross-link. Serine 373 carries the phosphoserine modification. Lysine 376 is covalently cross-linked (Glycyl lysine isopeptide (Lys-Gly) (interchain with G-Cter in ubiquitin)). Lysine 376 bears the N6-acetyllysine; alternate mark. A Glycyl lysine isopeptide (Lys-Gly) (interchain with G-Cter in SUMO2); alternate cross-link involves residue lysine 376. Residue lysine 393 forms a Glycyl lysine isopeptide (Lys-Gly) (interchain with G-Cter in ubiquitin); alternate linkage. Residues 410-466 are RG-rich region; sequence VEEKKTRAAREGDRRDNRLRGPGGPRGGLGGGMRGPPRGGMVQKPGFGVGRGLAPRQ. The segment covering 413-428 has biased composition (basic and acidic residues); the sequence is KKTRAAREGDRRDNRL. A disordered region spans residues 413-466; that stretch reads KKTRAAREGDRRDNRLRGPGGPRGGLGGGMRGPPRGGMVQKPGFGVGRGLAPRQ. Arginine 429 carries the asymmetric dimethylarginine modification. Residues 430-447 show a composition bias toward gly residues; the sequence is GPGGPRGGLGGGMRGPPR. Arginine 435 is modified (asymmetric dimethylarginine; alternate). Arginine 435 carries the dimethylated arginine; alternate modification. The residue at position 435 (arginine 435) is an Omega-N-methylarginine; alternate. Arginine 447 is subject to Omega-N-methylarginine. A Dimethylated arginine; alternate modification is found at arginine 460. Residue arginine 460 is modified to Omega-N-methylarginine; alternate. Arginine 465 carries the omega-N-methylarginine modification.

As to quaternary structure, homodimer and oligomer. Component of a TAU mRNP complex, at least composed of IGF2BP1, ELAVL4 and G3BP1. Binds to the SH3 domain of Ras GTPase-activating protein (RASA1) in proliferating cells. No interaction in quiescent cells. Interacts (via NTF2 domain) with USP10; inhibiting stress granule formation by lowering G3BP1 valence. Interacts (via NTF2 domain) with CAPRIN1; promoting stress granule formation by lowering the saturation-concentration of G3BP1. Interacts (via NTF2 domain) with UBAP2L; promoting stress granule formation. Associates (via RG-rich region) with 40S ribosome subunits. Interacts with RPTOR and SPAG5; this complex is increased by oxidative stress. Interacts with ATXN2L. Interacts with STYXL1. Interacts with CGAS (via N-terminus); this interaction promotes the DNA-binding and activation of CGAS. Interacts (via C-terminus) with RIGI. Interacts with PABPC1. Interacts with QKI (isoforms QKI6 and QKI7); directing N(7)-methylguanine-containing mRNAs to stress granules. In terms of assembly, (Microbial infection) Interacts with Semliki forest virus non-structural protein 3 (via C-terminus); this interaction inhibits the formation of stress granules on viral mRNAs and the nsp3-G3BP1 complexes bind viral RNAs and probably orchestrate the assembly of viral replication complexes. (Microbial infection) Interacts with Chikungunya virus non-structural protein 3 (via C-terminus); this interaction inhibits the formation of stress granules on viral mRNAs and the nsp3-G3BP1 complexes bind viral RNAs and probably orchestrate the assembly of viral replication complexes. As to quaternary structure, (Microbial infection) Interacts with Sindbis virus non-structural protein 3 (via C-terminus); this interaction inhibits the formation of stress granules on viral mRNAs and the nsp3-G3BP1 complexes bind viral RNAs and probably orchestrate the assembly of viral replication complexes. In terms of assembly, (Microbial infection) Interacts with Zika virus capsid protein C; this interaction is probably linked to the inhibition of stress granules formation by the virus. (Microbial infection) Interacts with reovirus type 2 protein sigma-NS; this interaction induces the relocalization of G3BP1 to the outer periphery of sigma-NS/mu-Ns viral factories and is probably involved in the suppression of the integrated stress response by the virus. As to quaternary structure, (Microbial infection) Interacts with SARS-CoV-2 N protein; the interaction is enhanced by host HDAC6 which deacetylates the viral N protein and promotes N protein association with G3BP1, disrupting stress granule formation and facilitating viral replication. Interacts with HDAC6; the interaction increases during SARS-CoV-2 infection. Requires Mg(2+) as cofactor. Post-translationally, phosphorylation of the acidic disordered region regulates stress granule assembly. RASA1-dependent phosphorylation of Ser-149 induces a conformational change that prevents self-association. Dephosphorylation after HRAS activation is required for stress granule assembly. Ser-149 phosphorylation induces partial nuclear localization. In terms of processing, ubiquitinated by TRIM21 via 'Lys-63'-linked polyubiquitination in the NTF2 domain in response to heat shock, leading to stress granule disassembly: ubiquitination promotes interaction with the FAF2 adapter, followed by interaction with VCP, which extracts G3BP1 from stress granules, leading to stress granule disassembly. In case of prolonged stress, ubiquitination by TRIM21 leads to autophagy-dependent degradation of G3BP1 via recruitment of ubiquitinated G3BP1 by SQSTM1 and/or CALCOCO2 to autophagosomes. (Microbial infection) Cleaved by human enterovirus 71; this cleavage induces the disassembly of cytoplasmic stress granules. Cleaved by Foot-and-mouth disease virus; this cleavage suppresses the formation of cytoplasmic stress granules. Post-translationally, arg-435 is dimethylated, probably to asymmetric dimethylarginine. In terms of processing, (Microbial infection) Cleaved by Encephalomyocarditis virus protease 3C; this cleavage suppresses the formation of cytoplasmic stress granules. In terms of tissue distribution, ubiquitous.

The protein resides in the cytoplasm. The protein localises to the cytosol. It is found in the perikaryon. Its subcellular location is the stress granule. It localises to the nucleus. It carries out the reaction ATP + H2O = ADP + phosphate + H(+). With respect to regulation, under physiological conditions, G3BP1 adopts a compact state that is stabilized by intramolecular interactions between the RG-rich and the acidic regions that inhibit phase separation. Upon stress, polysomes disassemble and mRNAs are released in an unfolded protein-free state. Binding of unfolded mRNA to G3BP1 outcompetes the intramolecular interactions and RNA-bound G3BP1 adopts an expanded conformation in which the RG-rich region becomes exposed to engage in protein-protein and protein-RNA interactions, allowing physical cross-linking of RNA molecules to form protein-RNA condensates, leading to liquid-liquid phase separation (LLPS). Protein involved in various processes, such as stress granule formation and innate immunity. Plays an essential role in stress granule formation. Stress granules are membraneless compartments that store mRNAs and proteins, such as stalled translation pre-initiation complexes, in response to stress. Promotes formation of stress granules phase-separated membraneless compartment by undergoing liquid-liquid phase separation (LLPS) upon unfolded RNA-binding: functions as a molecular switch that triggers RNA-dependent LLPS in response to a rise in intracellular free RNA concentrations. Also acts as an ATP- and magnesium-dependent helicase: unwinds DNA/DNA, RNA/DNA, and RNA/RNA substrates with comparable efficiency. Acts unidirectionally by moving in the 5' to 3' direction along the bound single-stranded DNA. Unwinds preferentially partial DNA and RNA duplexes having a 17 bp annealed portion and either a hanging 3' tail or hanging tails at both 5'- and 3'-ends. Plays an essential role in innate immunity by promoting CGAS and RIGI activity. Participates in the DNA-triggered cGAS/STING pathway by promoting the DNA binding and activation of CGAS. Triggers the condensation of cGAS, a process probably linked to the formation of membrane-less organelles. Also enhances RIGI-induced type I interferon production probably by helping RIGI at sensing pathogenic RNA. May also act as a phosphorylation-dependent sequence-specific endoribonuclease in vitro: Cleaves exclusively between cytosine and adenine and cleaves MYC mRNA preferentially at the 3'-UTR. The chain is Ras GTPase-activating protein-binding protein 1 from Homo sapiens (Human).